Here is a 187-residue protein sequence, read N- to C-terminus: uncharacterized protein (187 aa).

Residues F8 to L28 traverse the membrane as a helical segment.

Its subcellular location is the membrane. This is an uncharacterized protein from Bacillus subtilis (strain 168).